The chain runs to 164 residues: Protein-export protein SecB (164 aa).

The protein belongs to the SecB family. In terms of assembly, homotetramer, a dimer of dimers. One homotetramer interacts with 1 SecA dimer.

It is found in the cytoplasm. Its function is as follows. One of the proteins required for the normal export of preproteins out of the cell cytoplasm. It is a molecular chaperone that binds to a subset of precursor proteins, maintaining them in a translocation-competent state. It also specifically binds to its receptor SecA. The protein is Protein-export protein SecB of Caulobacter sp. (strain K31).